The sequence spans 458 residues: UDP-N-acetylmuramoylalanine--D-glutamate ligase (458 aa).

Residue 124–130 (GSDGKTT) participates in ATP binding.

The protein belongs to the MurCDEF family.

Its subcellular location is the cytoplasm. The catalysed reaction is UDP-N-acetyl-alpha-D-muramoyl-L-alanine + D-glutamate + ATP = UDP-N-acetyl-alpha-D-muramoyl-L-alanyl-D-glutamate + ADP + phosphate + H(+). It participates in cell wall biogenesis; peptidoglycan biosynthesis. Functionally, cell wall formation. Catalyzes the addition of glutamate to the nucleotide precursor UDP-N-acetylmuramoyl-L-alanine (UMA). The sequence is that of UDP-N-acetylmuramoylalanine--D-glutamate ligase from Clostridium botulinum (strain ATCC 19397 / Type A).